The following is a 145-amino-acid chain: D-aminoacyl-tRNA deacylase (145 aa).

The short motif at 137-138 (GP) is the Gly-cisPro motif, important for rejection of L-amino acids element.

The protein belongs to the DTD family. As to quaternary structure, homodimer.

It is found in the cytoplasm. It catalyses the reaction glycyl-tRNA(Ala) + H2O = tRNA(Ala) + glycine + H(+). The enzyme catalyses a D-aminoacyl-tRNA + H2O = a tRNA + a D-alpha-amino acid + H(+). An aminoacyl-tRNA editing enzyme that deacylates mischarged D-aminoacyl-tRNAs. Also deacylates mischarged glycyl-tRNA(Ala), protecting cells against glycine mischarging by AlaRS. Acts via tRNA-based rather than protein-based catalysis; rejects L-amino acids rather than detecting D-amino acids in the active site. By recycling D-aminoacyl-tRNA to D-amino acids and free tRNA molecules, this enzyme counteracts the toxicity associated with the formation of D-aminoacyl-tRNA entities in vivo and helps enforce protein L-homochirality. The sequence is that of D-aminoacyl-tRNA deacylase from Rhodococcus opacus (strain B4).